A 262-amino-acid polypeptide reads, in one-letter code: Hydroxyethylthiazole kinase (262 aa).

Met43 contributes to the substrate binding site. 2 residues coordinate ATP: Arg118 and Thr164. Ala191 contributes to the substrate binding site.

This sequence belongs to the Thz kinase family. Requires Mg(2+) as cofactor.

The catalysed reaction is 5-(2-hydroxyethyl)-4-methylthiazole + ATP = 4-methyl-5-(2-phosphooxyethyl)-thiazole + ADP + H(+). It participates in cofactor biosynthesis; thiamine diphosphate biosynthesis; 4-methyl-5-(2-phosphoethyl)-thiazole from 5-(2-hydroxyethyl)-4-methylthiazole: step 1/1. In terms of biological role, catalyzes the phosphorylation of the hydroxyl group of 4-methyl-5-beta-hydroxyethylthiazole (THZ). The chain is Hydroxyethylthiazole kinase from Cereibacter sphaeroides (strain ATCC 17025 / ATH 2.4.3) (Rhodobacter sphaeroides).